Consider the following 83-residue polypeptide: Large ribosomal subunit protein bL28 (83 aa).

This sequence belongs to the bacterial ribosomal protein bL28 family.

In Amoebophilus asiaticus (strain 5a2), this protein is Large ribosomal subunit protein bL28.